The sequence spans 506 residues: Zinc finger protein MAGPIE (506 aa).

The segment at Met1–Glu53 is disordered. Residues Ser9–Thr21 show a composition bias toward low complexity. Over residues Asp22–Glu33 the composition is skewed to basic and acidic residues. Residue Ser60 is modified to Phosphoserine. 2 C2H2-type zinc fingers span residues Phe70 to His92 and Tyr111 to His141. Residues Ile133 to Lys140 carry the Nuclear localization signal motif. Residues Trp146 to Gly169 form a C2H2-type 2; degenerate zinc finger. Zn(2+) is bound by residues Cys148, Cys151, His164, Cys168, Cys175, Cys177, His190, and Cys194. The CCHC-type 2; atypical zinc finger occupies Tyr173 to Ala196. Positions Arg183–Asp195 are SHR-binding.

In terms of assembly, interacts with SHR, SCR and JKD, but not with itself. Interacts with SIEL. Binds to RGA and SCL3 competitively in the nucleus. Expressed in the ground tissue and stele cells of embryos and 2-days post-germination roots but not in the quiescent center. Detected only in cells that perform asymmetric cell divisions. In roots, present in cortex, endodermis, and pericycle layer.

It is found in the nucleus. Its function is as follows. Transcription factor that regulates tissue boundaries and asymmetric cell division. Contributes to the sequestration of 'SHORT-ROOT' to the nucleus. Interacts with the SCR and MGP promoters. Does not show transcription activity by itself, but regulates the transcription of downstream genes through interaction with other transcription factors. Binds DNA via its zinc fingers. Recognizes and binds to SCL3 promoter sequence 5'-AGACAA-3' to promote its expression when in complex with RGA. Positively involved in gibberellic acid (GA) signaling. The protein is Zinc finger protein MAGPIE of Arabidopsis thaliana (Mouse-ear cress).